The following is a 310-amino-acid chain: Biotin synthase (310 aa).

The region spanning 34 to 262 (GRVQLCALVN…TAQIRLSAGR (229 aa)) is the Radical SAM core domain. 3 residues coordinate [4Fe-4S] cluster: C49, C53, and C56. 4 residues coordinate [2Fe-2S] cluster: C93, C125, C185, and R257.

The protein belongs to the radical SAM superfamily. Biotin synthase family. As to quaternary structure, homodimer. [4Fe-4S] cluster serves as cofactor. Requires [2Fe-2S] cluster as cofactor.

The enzyme catalyses (4R,5S)-dethiobiotin + (sulfur carrier)-SH + 2 reduced [2Fe-2S]-[ferredoxin] + 2 S-adenosyl-L-methionine = (sulfur carrier)-H + biotin + 2 5'-deoxyadenosine + 2 L-methionine + 2 oxidized [2Fe-2S]-[ferredoxin]. Its pathway is cofactor biosynthesis; biotin biosynthesis; biotin from 7,8-diaminononanoate: step 2/2. Functionally, catalyzes the conversion of dethiobiotin (DTB) to biotin by the insertion of a sulfur atom into dethiobiotin via a radical-based mechanism. In Synechococcus sp. (strain JA-3-3Ab) (Cyanobacteria bacterium Yellowstone A-Prime), this protein is Biotin synthase.